We begin with the raw amino-acid sequence, 442 residues long: Proline--tRNA ligase (442 aa).

This sequence belongs to the class-II aminoacyl-tRNA synthetase family. ProS type 2 subfamily. Homodimer.

Its subcellular location is the cytoplasm. It carries out the reaction tRNA(Pro) + L-proline + ATP = L-prolyl-tRNA(Pro) + AMP + diphosphate. Catalyzes the attachment of proline to tRNA(Pro) in a two-step reaction: proline is first activated by ATP to form Pro-AMP and then transferred to the acceptor end of tRNA(Pro). This chain is Proline--tRNA ligase, found in Brucella canis (strain ATCC 23365 / NCTC 10854 / RM-666).